Here is a 168-residue protein sequence, read N- to C-terminus: G/U mismatch-specific DNA glycosylase (168 aa).

It belongs to the uracil-DNA glycosylase (UDG) superfamily. TDG/mug family. Binds DNA as a monomer.

It localises to the cytoplasm. The enzyme catalyses Specifically hydrolyzes mismatched double-stranded DNA and polynucleotides, releasing free uracil.. In terms of biological role, excises ethenocytosine and uracil, which can arise by alkylation or deamination of cytosine, respectively, from the corresponding mispairs with guanine in ds-DNA. It is capable of hydrolyzing the carbon-nitrogen bond between the sugar-phosphate backbone of the DNA and the mispaired base. The complementary strand guanine functions in substrate recognition. Required for DNA damage lesion repair in stationary-phase cells. This is G/U mismatch-specific DNA glycosylase from Klebsiella pneumoniae subsp. pneumoniae (strain ATCC 700721 / MGH 78578).